Reading from the N-terminus, the 366-residue chain is Actin-like protein 8 (366 aa).

This sequence belongs to the actin family. In terms of tissue distribution, strongly expressed in testis and pancreas. Weak expression in placenta.

The protein localises to the cytoplasm. Its subcellular location is the cytoskeleton. The polypeptide is Actin-like protein 8 (ACTL8) (Homo sapiens (Human)).